We begin with the raw amino-acid sequence, 180 residues long: Large ribosomal subunit protein uL5 (180 aa).

The protein belongs to the universal ribosomal protein uL5 family. As to quaternary structure, part of the 50S ribosomal subunit; part of the 5S rRNA/L5/L18/L25 subcomplex. Contacts the 5S rRNA and the P site tRNA. Forms a bridge to the 30S subunit in the 70S ribosome.

Functionally, this is one of the proteins that bind and probably mediate the attachment of the 5S RNA into the large ribosomal subunit, where it forms part of the central protuberance. In the 70S ribosome it contacts protein S13 of the 30S subunit (bridge B1b), connecting the 2 subunits; this bridge is implicated in subunit movement. Contacts the P site tRNA; the 5S rRNA and some of its associated proteins might help stabilize positioning of ribosome-bound tRNAs. This is Large ribosomal subunit protein uL5 from Mycoplasma mycoides subsp. mycoides SC (strain CCUG 32753 / NCTC 10114 / PG1).